A 193-amino-acid polypeptide reads, in one-letter code: dCTP deaminase (193 aa).

Residues 110-115 (RSSLAR), Asp128, 136-138 (VLE), Tyr171, Lys178, and Gln182 each bind dCTP. The active-site Proton donor/acceptor is Glu138.

Belongs to the dCTP deaminase family. In terms of assembly, homotrimer.

The enzyme catalyses dCTP + H2O + H(+) = dUTP + NH4(+). Its pathway is pyrimidine metabolism; dUMP biosynthesis; dUMP from dCTP (dUTP route): step 1/2. Catalyzes the deamination of dCTP to dUTP. This Aeromonas hydrophila subsp. hydrophila (strain ATCC 7966 / DSM 30187 / BCRC 13018 / CCUG 14551 / JCM 1027 / KCTC 2358 / NCIMB 9240 / NCTC 8049) protein is dCTP deaminase.